Here is a 150-residue protein sequence, read N- to C-terminus: Cytochrome c oxidase subunit 5A, mitochondrial (150 aa).

The N-terminal 41 residues, 1–41, are a transit peptide targeting the mitochondrion; that stretch reads MLGTALRRCAVAAASRAGSRGLLHPTPVPGPTAAIQSIRCY. Residues 2–17 carry the SIFI-degron motif; that stretch reads LGTALRRCAVAAASRA. Residues Lys-87 and Lys-113 each carry the N6-acetyllysine modification. Residue Thr-141 is modified to Phosphothreonine.

This sequence belongs to the cytochrome c oxidase subunit 5A family. As to quaternary structure, component of the cytochrome c oxidase (complex IV, CIV), a multisubunit enzyme composed of 14 subunits. The complex is composed of a catalytic core of 3 subunits MT-CO1, MT-CO2 and MT-CO3, encoded in the mitochondrial DNA, and 11 supernumerary subunits COX4I, COX5A, COX5B, COX6A, COX6B, COX6C, COX7A, COX7B, COX7C, COX8 and NDUFA4, which are encoded in the nuclear genome. The complex exists as a monomer or a dimer and forms supercomplexes (SCs) in the inner mitochondrial membrane with NADH-ubiquinone oxidoreductase (complex I, CI) and ubiquinol-cytochrome c oxidoreductase (cytochrome b-c1 complex, complex III, CIII), resulting in different assemblies (supercomplex SCI(1)III(2)IV(1) and megacomplex MCI(2)III(2)IV(2)). Interacts with AFG1L. Interacts with RAB5IF. In terms of processing, in response to mitochondrial stress, the precursor protein is ubiquitinated by the SIFI complex in the cytoplasm before mitochondrial import, leading to its degradation. Within the SIFI complex, UBR4 initiates ubiquitin chain that are further elongated or branched by KCMF1.

It is found in the mitochondrion inner membrane. It participates in energy metabolism; oxidative phosphorylation. In terms of biological role, component of the cytochrome c oxidase, the last enzyme in the mitochondrial electron transport chain which drives oxidative phosphorylation. The respiratory chain contains 3 multisubunit complexes succinate dehydrogenase (complex II, CII), ubiquinol-cytochrome c oxidoreductase (cytochrome b-c1 complex, complex III, CIII) and cytochrome c oxidase (complex IV, CIV), that cooperate to transfer electrons derived from NADH and succinate to molecular oxygen, creating an electrochemical gradient over the inner membrane that drives transmembrane transport and the ATP synthase. Cytochrome c oxidase is the component of the respiratory chain that catalyzes the reduction of oxygen to water. Electrons originating from reduced cytochrome c in the intermembrane space (IMS) are transferred via the dinuclear copper A center (CU(A)) of subunit 2 and heme A of subunit 1 to the active site in subunit 1, a binuclear center (BNC) formed by heme A3 and copper B (CU(B)). The BNC reduces molecular oxygen to 2 water molecules using 4 electrons from cytochrome c in the IMS and 4 protons from the mitochondrial matrix. The protein is Cytochrome c oxidase subunit 5A, mitochondrial (COX5A) of Otolemur crassicaudatus (Brown greater galago).